The primary structure comprises 282 residues: MALKYYKPTTNGRRHMSSLDFGANLTTNKPEKSLLTILKKHSGRNSQGKITVRHQGGRHKRKYRLIDFKRNKDDIPGIVKTIEYDPNRSANIALISYIDGEKRYILAPKNLKVGQKISSGPKSDILVGNALPLAKIPEGTFVHNIELKPGAGAKLIRSAGTWAQIQGRDEDGKYVILKLKSGEYRRILATCRATIGVVGNEENSLVNIGKAGRNRHKGIRPTVRGSVMNPNDHPHGGGEGKQPIGRKSPLTPWGKKALGVKTRNPKKPSTKLIIRSRKETKK.

The segment at 215–282 (RHKGIRPTVR…IIRSRKETKK (68 aa)) is disordered. Residues 263–282 (RNPKKPSTKLIIRSRKETKK) show a composition bias toward basic residues.

This sequence belongs to the universal ribosomal protein uL2 family. As to quaternary structure, part of the 50S ribosomal subunit. Forms a bridge to the 30S subunit in the 70S ribosome.

Functionally, one of the primary rRNA binding proteins. Required for association of the 30S and 50S subunits to form the 70S ribosome, for tRNA binding and peptide bond formation. It has been suggested to have peptidyltransferase activity; this is somewhat controversial. Makes several contacts with the 16S rRNA in the 70S ribosome. The sequence is that of Large ribosomal subunit protein uL2 from Mesomycoplasma hyopneumoniae (strain 7448) (Mycoplasma hyopneumoniae).